The sequence spans 152 residues: Endoribonuclease YbeY (152 aa).

Positions 118, 122, and 128 each coordinate Zn(2+).

Belongs to the endoribonuclease YbeY family. Zn(2+) serves as cofactor.

The protein resides in the cytoplasm. Single strand-specific metallo-endoribonuclease involved in late-stage 70S ribosome quality control and in maturation of the 3' terminus of the 16S rRNA. The polypeptide is Endoribonuclease YbeY (Lacticaseibacillus paracasei (strain ATCC 334 / BCRC 17002 / CCUG 31169 / CIP 107868 / KCTC 3260 / NRRL B-441) (Lactobacillus paracasei)).